A 339-amino-acid polypeptide reads, in one-letter code: N-acetyl-gamma-glutamyl-phosphate reductase (339 aa).

Cys-145 is a catalytic residue.

It belongs to the NAGSA dehydrogenase family. Type 1 subfamily.

It localises to the cytoplasm. It carries out the reaction N-acetyl-L-glutamate 5-semialdehyde + phosphate + NADP(+) = N-acetyl-L-glutamyl 5-phosphate + NADPH + H(+). It functions in the pathway amino-acid biosynthesis; L-arginine biosynthesis; N(2)-acetyl-L-ornithine from L-glutamate: step 3/4. In terms of biological role, catalyzes the NADPH-dependent reduction of N-acetyl-5-glutamyl phosphate to yield N-acetyl-L-glutamate 5-semialdehyde. This chain is N-acetyl-gamma-glutamyl-phosphate reductase, found in Thermotoga maritima (strain ATCC 43589 / DSM 3109 / JCM 10099 / NBRC 100826 / MSB8).